We begin with the raw amino-acid sequence, 308 residues long: Alternaria stem canker resistance protein 1 (308 aa).

Helical transmembrane passes span Tyr-21–Leu-41, Phe-82–Phe-102, Leu-128–Glu-148, Val-165–Ala-185, Phe-213–Ile-233, and Ile-254–Trp-274. Positions Asn-73–Leu-287 constitute a TLC domain.

It is found in the endoplasmic reticulum membrane. Mediates resistance to sphinganine-analog mycotoxins (SAMs) by restoring the sphingolipid biosynthesis. Could salvage the transport of GPI-anchored proteins from the endoplasmic reticulum to the Golgi apparatus in ceramides-depleted cells after SAM exposure. This Solanum lycopersicum (Tomato) protein is Alternaria stem canker resistance protein 1.